Consider the following 885-residue polypeptide: Disease resistance protein RFL1 (885 aa).

Positions 27–61 form a coiled coil; that stretch reads SYIQNLSENLASLQKAMGVLNAKRDDVQGRINREE. Positions 141-443 constitute an NB-ARC domain; that stretch reads EAAPIAEVEE…CEGFIKEKQG (303 aa). 183–190 contacts ATP; sequence GMGGVGKT. 7 LRR repeats span residues 517-538, 539-561, 564-586, 588-610, 611-633, 634-655, and 657-679; these read AVKR…PECV, ELIT…FFRC, SLAV…ISEL, SLQY…HELR, KLVH…SYLS, SLRT…MKEL, and LLEH…LFCY.

The protein belongs to the disease resistance NB-LRR family.

In terms of biological role, disease resistance (R) protein. In Arabidopsis thaliana (Mouse-ear cress), this protein is Disease resistance protein RFL1 (RFL1).